Consider the following 262-residue polypeptide: Alpha-tubulin N-acetyltransferase 1 (262 aa).

One can recognise an N-acetyltransferase domain in the interval 1 to 177 (MQVDADLRPI…TNFVVFEELF (177 aa)). Acetyl-CoA is bound at residue 111–124 (FYVHFSCQRQGVGQ).

It belongs to the acetyltransferase ATAT1 family. Expressed solely in touch receptor neurons.

It carries out the reaction L-lysyl-[alpha-tubulin] + acetyl-CoA = N(6)-acetyl-L-lysyl-[alpha-tubulin] + CoA + H(+). Its function is as follows. Specifically acetylates 'Lys-40' in alpha-tubulin/mec-12 on the lumenal side of microtubules. Promotes microtubule destabilization and accelerates microtubule dynamics; this activity may be independent of acetylation activity. Acetylates alpha-tubulin with a slow enzymatic rate, due to a catalytic site that is not optimized for acetyl transfer. Enters the microtubule through each end and diffuses quickly throughout the lumen of microtubules. Acetylates only long/old microtubules because of its slow acetylation rate since it does not have time to act on dynamically unstable microtubules before the enzyme is released. Required for the maintenance of touch receptor neurons and possibly other type of neurons involved in locomotion. Regulates the number and localization of mitochondria in mechanosensory neurons. Plays a role in axonal transport. This chain is Alpha-tubulin N-acetyltransferase 1, found in Caenorhabditis elegans.